Here is a 429-residue protein sequence, read N- to C-terminus: Ribosomal RNA small subunit methyltransferase B (429 aa).

S-adenosyl-L-methionine contacts are provided by residues 254-260 (CAAPGGK), Asp277, Asp303, and Asp322. Cys375 functions as the Nucleophile in the catalytic mechanism.

This sequence belongs to the class I-like SAM-binding methyltransferase superfamily. RsmB/NOP family.

Its subcellular location is the cytoplasm. The enzyme catalyses cytidine(967) in 16S rRNA + S-adenosyl-L-methionine = 5-methylcytidine(967) in 16S rRNA + S-adenosyl-L-homocysteine + H(+). Specifically methylates the cytosine at position 967 (m5C967) of 16S rRNA. The chain is Ribosomal RNA small subunit methyltransferase B from Escherichia fergusonii (strain ATCC 35469 / DSM 13698 / CCUG 18766 / IAM 14443 / JCM 21226 / LMG 7866 / NBRC 102419 / NCTC 12128 / CDC 0568-73).